The chain runs to 739 residues: Phosphoribosylformylglycinamidine synthase subunit PurL (739 aa).

H54 is a catalytic residue. Residues Y57 and K96 each contribute to the ATP site. E98 is a binding site for Mg(2+). Residues 99 to 102 (SHNH) and R121 contribute to the substrate site. H100 (proton acceptor) is an active-site residue. D122 contacts Mg(2+). Substrate is bound at residue Q245. A Mg(2+)-binding site is contributed by D275. 319–321 (ESQ) provides a ligand contact to substrate. Residues D504 and G541 each coordinate ATP. N542 is a binding site for Mg(2+). S544 contributes to the substrate binding site.

This sequence belongs to the FGAMS family. Monomer. Part of the FGAM synthase complex composed of 1 PurL, 1 PurQ and 2 PurS subunits.

Its subcellular location is the cytoplasm. It carries out the reaction N(2)-formyl-N(1)-(5-phospho-beta-D-ribosyl)glycinamide + L-glutamine + ATP + H2O = 2-formamido-N(1)-(5-O-phospho-beta-D-ribosyl)acetamidine + L-glutamate + ADP + phosphate + H(+). Its pathway is purine metabolism; IMP biosynthesis via de novo pathway; 5-amino-1-(5-phospho-D-ribosyl)imidazole from N(2)-formyl-N(1)-(5-phospho-D-ribosyl)glycinamide: step 1/2. Part of the phosphoribosylformylglycinamidine synthase complex involved in the purines biosynthetic pathway. Catalyzes the ATP-dependent conversion of formylglycinamide ribonucleotide (FGAR) and glutamine to yield formylglycinamidine ribonucleotide (FGAM) and glutamate. The FGAM synthase complex is composed of three subunits. PurQ produces an ammonia molecule by converting glutamine to glutamate. PurL transfers the ammonia molecule to FGAR to form FGAM in an ATP-dependent manner. PurS interacts with PurQ and PurL and is thought to assist in the transfer of the ammonia molecule from PurQ to PurL. This is Phosphoribosylformylglycinamidine synthase subunit PurL from Lactococcus lactis subsp. lactis (strain IL1403) (Streptococcus lactis).